The following is a 225-amino-acid chain: Fibronectin type III domain-containing protein 10 (225 aa).

Positions 1-19 (MRAPPLLLLLAACAPPSGA) are cleaved as a signal peptide. Over 20 to 181 (AVDPTPPGWE…FTAEPAAMQE (162 aa)) the chain is Extracellular. In terms of domain architecture, Fibronectin type-III spans 72–167 (LASAGGSLRA…ELAAAPPELA (96 aa)). N-linked (GlcNAc...) asparagine glycosylation is found at Asn86 and Asn109. The chain crosses the membrane as a helical span at residues 182-202 (IVVAMTAVGGSICVMLVVICL). The Cytoplasmic segment spans residues 203 to 225 (LVAYITENLMHPTFRRPSLRRQP).

Its subcellular location is the membrane. The chain is Fibronectin type III domain-containing protein 10 (Fndc10) from Rattus norvegicus (Rat).